A 450-amino-acid polypeptide reads, in one-letter code: Probable malate:quinone oxidoreductase (450 aa).

It belongs to the MQO family. FAD is required as a cofactor.

It carries out the reaction (S)-malate + a quinone = a quinol + oxaloacetate. It functions in the pathway carbohydrate metabolism; tricarboxylic acid cycle; oxaloacetate from (S)-malate (quinone route): step 1/1. In Helicobacter pylori (strain P12), this protein is Probable malate:quinone oxidoreductase.